Here is a 166-residue protein sequence, read N- to C-terminus: Large ribosomal subunit protein uL10 (166 aa).

This sequence belongs to the universal ribosomal protein uL10 family. As to quaternary structure, part of the ribosomal stalk of the 50S ribosomal subunit. The N-terminus interacts with L11 and the large rRNA to form the base of the stalk. The C-terminus forms an elongated spine to which L12 dimers bind in a sequential fashion forming a multimeric L10(L12)X complex.

Functionally, forms part of the ribosomal stalk, playing a central role in the interaction of the ribosome with GTP-bound translation factors. The polypeptide is Large ribosomal subunit protein uL10 (Azotobacter vinelandii (strain DJ / ATCC BAA-1303)).